A 175-amino-acid chain; its full sequence is NADH-ubiquinone oxidoreductase chain 6 (175 aa).

The next 5 helical transmembrane spans lie at 1-21 (MMTY…VGFS), 25-45 (SPIY…GIIM), 47-67 (FGGS…MLVV), 88-108 (TVMG…LYVL), and 149-169 (YGAW…LVIL).

The protein belongs to the complex I subunit 6 family. In terms of assembly, core subunit of respiratory chain NADH dehydrogenase (Complex I) which is composed of 45 different subunits.

The protein localises to the mitochondrion inner membrane. It carries out the reaction a ubiquinone + NADH + 5 H(+)(in) = a ubiquinol + NAD(+) + 4 H(+)(out). In terms of biological role, core subunit of the mitochondrial membrane respiratory chain NADH dehydrogenase (Complex I) which catalyzes electron transfer from NADH through the respiratory chain, using ubiquinone as an electron acceptor. Essential for the catalytic activity and assembly of complex I. The protein is NADH-ubiquinone oxidoreductase chain 6 (MT-ND6) of Equus caballus (Horse).